Here is a 382-residue protein sequence, read N- to C-terminus: D-galactonate dehydratase (382 aa).

D183 contacts Mg(2+). Catalysis depends on H185, which acts as the Proton donor. Mg(2+) contacts are provided by E209 and E235. H285 acts as the Proton acceptor in catalysis.

The protein belongs to the mandelate racemase/muconate lactonizing enzyme family. GalD subfamily. Mg(2+) serves as cofactor.

The catalysed reaction is D-galactonate = 2-dehydro-3-deoxy-D-galactonate + H2O. It functions in the pathway carbohydrate acid metabolism; D-galactonate degradation; D-glyceraldehyde 3-phosphate and pyruvate from D-galactonate: step 1/3. In terms of biological role, catalyzes the dehydration of D-galactonate to 2-keto-3-deoxy-D-galactonate. The protein is D-galactonate dehydratase of Escherichia fergusonii (strain ATCC 35469 / DSM 13698 / CCUG 18766 / IAM 14443 / JCM 21226 / LMG 7866 / NBRC 102419 / NCTC 12128 / CDC 0568-73).